The following is a 968-amino-acid chain: Insulin receptor substrate 1 (968 aa).

Residues glycine 8–arginine 109 enclose the PH domain. One can recognise an IRS-type PTB domain in the interval tyrosine 122 to asparagine 236. The disordered stretch occupies residues aspartate 248 to asparagine 269. Phosphoserine is present on residues serine 286 and serine 287. The segment covering arginine 304–serine 329 has biased composition (polar residues). Residues arginine 304–phenylalanine 370 are disordered. Position 342 is a phosphoserine (serine 342). Residue tyrosine 411 is modified to Phosphotyrosine; by INSR. Residues tyrosine 411–methionine 414 carry the YXXM motif 1 motif. The disordered stretch occupies residues threonine 528–serine 555. The segment covering alanine 529 to serine 555 has biased composition (polar residues). Residue serine 555 is modified to Phosphoserine. A YXXM motif 2 motif is present at residues tyrosine 641–methionine 644. Basic and acidic residues predominate over residues glutamate 697 to serine 711. Residues glutamate 697 to alanine 739 are disordered. Polar residues predominate over residues asparagine 712 to threonine 730. At tyrosine 911 the chain carries Phosphotyrosine; by INSR. Positions glutamine 922–threonine 968 are disordered. Phosphoserine occurs at positions 932 and 935. Phosphotyrosine; by INSR is present on tyrosine 948. A compositionally biased stretch (low complexity) spans serine 956–threonine 968.

In terms of assembly, bindings to phosphatidylinositol 3-kinase and SHP2.

Its function is as follows. Activates phosphatidylinositol 3-kinase when bound to the regulatory p85 subunit. May mediate the control of various cellular processes by insulin-like peptides. When phosphorylated by the insulin receptor binds specifically to various cellular proteins containing SH2 domains. Involved in control of cell proliferation, cell size, and body and organ growth throughout development. Also has a role in a signaling pathway controlling the physiological response required to endure periods of low nutrient conditions. Insulin/insulin-like growth factor (IGF) signaling pathway has a role in regulating aging and is necessary in the ovary for vitellogenic maturation. The polypeptide is Insulin receptor substrate 1 (chico) (Drosophila melanogaster (Fruit fly)).